Reading from the N-terminus, the 444-residue chain is MITIKKGLELPITGGPEQVIHNGPAINHVATLGEEYIGLRPTMKIKVGDKVQKGQVLFEDKKNLGVKYTALASGTILEINRGAKRVLQSVVIAVEGDDSVAFSKHDAGSLATLDAQLVRTNLIDSGLWTALRTRPFSKVPAVDATAAGIFVTAIDTQPLAADPAVVIAEHKDDFANGLTLLAKLTEGKVFLCKAPGADIPAANAQVEEFAGIHPAGLVGTHIHNLLPASAKRSVWHIGYQDVIAIGQLFTQGVLNTERVFAIGGPKAKKPRLVRSRLGASLVELMADETQAGDVRVISGSVLNGRTAAGVHAYAGRYHQQITVLEEGREQEFFGWAMPGGDKFSITRSFLSHLSPSRLFNMTTSTGGSERAMVPIGNYERVVPLDVLPTLLLRDLLSGDFDSAVTLGALELDEEDLALCTFVCPGKYDYGSYLRDCLDTIEREG.

It belongs to the NqrA family. In terms of assembly, composed of six subunits; NqrA, NqrB, NqrC, NqrD, NqrE and NqrF.

The catalysed reaction is a ubiquinone + n Na(+)(in) + NADH + H(+) = a ubiquinol + n Na(+)(out) + NAD(+). In terms of biological role, NQR complex catalyzes the reduction of ubiquinone-1 to ubiquinol by two successive reactions, coupled with the transport of Na(+) ions from the cytoplasm to the periplasm. NqrA to NqrE are probably involved in the second step, the conversion of ubisemiquinone to ubiquinol. The polypeptide is Na(+)-translocating NADH-quinone reductase subunit A (Shewanella denitrificans (strain OS217 / ATCC BAA-1090 / DSM 15013)).